The primary structure comprises 71 residues: Large ribosomal subunit protein bL31 (71 aa).

Positions 16, 18, 38, and 41 each coordinate Zn(2+).

It belongs to the bacterial ribosomal protein bL31 family. Type A subfamily. Part of the 50S ribosomal subunit. Requires Zn(2+) as cofactor.

Functionally, binds the 23S rRNA. The polypeptide is Large ribosomal subunit protein bL31 (Francisella tularensis subsp. mediasiatica (strain FSC147)).